The chain runs to 500 residues: Histidine--tRNA ligase (500 aa).

Belongs to the class-II aminoacyl-tRNA synthetase family. As to quaternary structure, homodimer.

It localises to the cytoplasm. It carries out the reaction tRNA(His) + L-histidine + ATP = L-histidyl-tRNA(His) + AMP + diphosphate + H(+). The protein is Histidine--tRNA ligase of Ruegeria sp. (strain TM1040) (Silicibacter sp.).